The primary structure comprises 301 residues: Ribosomal RNA small subunit methyltransferase H (301 aa).

S-adenosyl-L-methionine-binding positions include 31–33 (GGY), Asp49, Phe76, Asp97, and Gln104.

The protein belongs to the methyltransferase superfamily. RsmH family.

It localises to the cytoplasm. The enzyme catalyses cytidine(1402) in 16S rRNA + S-adenosyl-L-methionine = N(4)-methylcytidine(1402) in 16S rRNA + S-adenosyl-L-homocysteine + H(+). In terms of biological role, specifically methylates the N4 position of cytidine in position 1402 (C1402) of 16S rRNA. This chain is Ribosomal RNA small subunit methyltransferase H, found in Ehrlichia ruminantium (strain Gardel).